The following is a 545-amino-acid chain: Chaperonin GroEL 2 (545 aa).

Residues 30–33, Lys51, 87–91, Gly415, and Asp494 contribute to the ATP site; these read TLGP and DGTTT. A disordered region spans residues 526-545; sequence EKGAGMPGMPPGGGYPGMGM. The segment covering 536-545 has biased composition (gly residues); sequence PGGGYPGMGM.

It belongs to the chaperonin (HSP60) family. In terms of assembly, forms a cylinder of 14 subunits composed of two heptameric rings stacked back-to-back. Interacts with the co-chaperonin GroES.

It localises to the cytoplasm. It carries out the reaction ATP + H2O + a folded polypeptide = ADP + phosphate + an unfolded polypeptide.. In terms of biological role, together with its co-chaperonin GroES, plays an essential role in assisting protein folding. The GroEL-GroES system forms a nano-cage that allows encapsulation of the non-native substrate proteins and provides a physical environment optimized to promote and accelerate protein folding. The protein is Chaperonin GroEL 2 of Syntrophus aciditrophicus (strain SB).